The primary structure comprises 348 residues: Phospho-2-dehydro-3-deoxyheptonate aldolase, Trp-sensitive (348 aa).

This sequence belongs to the class-I DAHP synthase family.

The enzyme catalyses D-erythrose 4-phosphate + phosphoenolpyruvate + H2O = 7-phospho-2-dehydro-3-deoxy-D-arabino-heptonate + phosphate. It participates in metabolic intermediate biosynthesis; chorismate biosynthesis; chorismate from D-erythrose 4-phosphate and phosphoenolpyruvate: step 1/7. Stereospecific condensation of phosphoenolpyruvate (PEP) and D-erythrose-4-phosphate (E4P) giving rise to 3-deoxy-D-arabino-heptulosonate-7-phosphate (DAHP). The protein is Phospho-2-dehydro-3-deoxyheptonate aldolase, Trp-sensitive (aroH) of Shigella flexneri.